The sequence spans 206 residues: Ribosomal RNA large subunit methyltransferase E (206 aa).

Residues G61, W63, D81, D97, and D122 each contribute to the S-adenosyl-L-methionine site. The active-site Proton acceptor is the K162.

It belongs to the class I-like SAM-binding methyltransferase superfamily. RNA methyltransferase RlmE family.

Its subcellular location is the cytoplasm. The catalysed reaction is uridine(2552) in 23S rRNA + S-adenosyl-L-methionine = 2'-O-methyluridine(2552) in 23S rRNA + S-adenosyl-L-homocysteine + H(+). Its function is as follows. Specifically methylates the uridine in position 2552 of 23S rRNA at the 2'-O position of the ribose in the fully assembled 50S ribosomal subunit. The sequence is that of Ribosomal RNA large subunit methyltransferase E from Neisseria gonorrhoeae (strain ATCC 700825 / FA 1090).